We begin with the raw amino-acid sequence, 723 residues long: Nucleolar protein 11 (723 aa).

It is found in the nucleus. Its subcellular location is the nucleolus. Functionally, ribosome biogenesis factor. May be required for both optimal rDNA transcription and pre-rRNA processing. This Gallus gallus (Chicken) protein is Nucleolar protein 11 (NOL11).